Consider the following 683-residue polypeptide: Transforming growth factor-beta-induced protein ig-h3 (683 aa).

The N-terminal stretch at 1–23 (MALFVRLLALALALALGPAATLA) is a signal peptide. A Phosphoserine modification is found at serine 37. An EMI domain is found at 45–99 (GPNVCAVQKVIGTNRKYFTNCKQWYQRKICGKSTVISYECCPGYEKVPGERSCPA). Cystine bridges form between cysteine 49/cysteine 85, cysteine 74/cysteine 339, cysteine 84/cysteine 97, cysteine 214/cysteine 317, and cysteine 473/cysteine 478. Cysteine 65 carries the post-translational modification S-cysteinyl cysteine. 4 consecutive FAS1 domains span residues 103 to 236 (LANL…DKVI), 240 to 371 (TNNI…DELL), 375 to 498 (SAKT…DRML), and 502 to 632 (SGTV…TSVL). Residues 642–644 (RGD) carry the Cell attachment site motif.

Binds to type I, II, and IV collagens. Gamma-carboxylation is controversial. Gamma-carboxyglutamated; gamma-carboxyglutamate residues are formed by vitamin K dependent carboxylation; this may be required for calcium binding. According to a more recent report, does not contain vitamin K-dependent gamma-carboxyglutamate residues. In terms of processing, the EMI domain contains 2 expected intradomain disulfide bridges (Cys-49-Cys85 and Cys-84-Cys-97) and one unusual interdomain disulfide bridge to the second FAS1 domain (Cys-74-Cys-339). This arrangement violates the predicted disulfide bridge pattern of an EMI domain. As to expression, located primarily in the epithelium of normal adult cornea, in fetal stromal cells, and both endothelium- and stroma-derived cells in healing corneal wounds. Not expressed in normal adult endothelium and stroma.

It is found in the secreted. It localises to the extracellular space. Its subcellular location is the extracellular matrix. Plays a role in cell adhesion. May play a role in cell-collagen interactions. The sequence is that of Transforming growth factor-beta-induced protein ig-h3 (TGFBI) from Oryctolagus cuniculus (Rabbit).